Reading from the N-terminus, the 830-residue chain is Periplasmic nitrate reductase (830 aa).

The segment at residues 1–31 is a signal peptide (tat-type signal); the sequence is MKLSRRDFMKANAAVAAAAAAGMTIPTVAKA. Residues 39–95 enclose the 4Fe-4S Mo/W bis-MGD-type domain; the sequence is IKWDKAPCRFCGTGCGVLVGTQNGRIVASQGDPDSPVNRGLNCIKGYFLPKIMYGKD. Cys46, Cys49, Cys53, and Cys81 together coordinate [4Fe-4S] cluster. Residues Lys83, Gln150, Asn175, Cys179, 212–219, 243–247, 262–264, Met372, Gln376, Asn482, 508–509, Lys531, Asp558, and 718–727 each bind Mo-bis(molybdopterin guanine dinucleotide); these read WGSNMAEM, STYEH, QTD, SD, and TGRVLEHWHT. Phe794 provides a ligand contact to substrate. Mo-bis(molybdopterin guanine dinucleotide) is bound by residues Asn802 and Lys819.

This sequence belongs to the prokaryotic molybdopterin-containing oxidoreductase family. NasA/NapA/NarB subfamily. Component of the periplasmic nitrate reductase NapAB complex composed of NapA and NapB. [4Fe-4S] cluster is required as a cofactor. The cofactor is Mo-bis(molybdopterin guanine dinucleotide). In terms of processing, predicted to be exported by the Tat system. The position of the signal peptide cleavage has not been experimentally proven.

It localises to the periplasm. The catalysed reaction is 2 Fe(II)-[cytochrome] + nitrate + 2 H(+) = 2 Fe(III)-[cytochrome] + nitrite + H2O. Catalytic subunit of the periplasmic nitrate reductase complex NapAB. Receives electrons from NapB and catalyzes the reduction of nitrate to nitrite. In Yersinia pestis bv. Antiqua (strain Antiqua), this protein is Periplasmic nitrate reductase.